Here is a 711-residue protein sequence, read N- to C-terminus: Ferric/cupric reductase transmembrane component 2 (711 aa).

Residues 1–23 form the signal peptide; it reads MHWTSILSAILLFCLSGARASPA. Residues 24-164 are Extracellular-facing; the sequence is KTVIRNKVPL…GFYANLDVGN (141 aa). N-linked (GlcNAc...) asparagine glycans are attached at residues asparagine 85, asparagine 108, asparagine 120, and asparagine 134. A helical membrane pass occupies residues 165 to 185; it reads IYGGIICAYFVAIMAFAGVLH. Over 186–235 the chain is Cytoplasmic; it reads CMNYTPFKTVLLKQKLVGYVRGYLTLPTIGSKHASDFSYFRIFTGYLPTR. Residues 236–256 traverse the membrane as a helical segment; that stretch reads LEGIIILGYLVLHTVFLAYGY. Over 257–280 the chain is Extracellular; the sequence is EYDPENIIFKSRRVQVARYVADRS. Residues 280 to 414 enclose the Ferric oxidoreductase domain; it reads SGVLAFAHFP…SGIEWIYTAI (135 aa). The helical transmembrane segment at 281-301 threads the bilayer; that stretch reads GVLAFAHFPLIVLFAGRNNFL. Residues 302-317 lie on the Cytoplasmic side of the membrane; that stretch reads EYISGVKYTSFIMFHK. Histidine 316 and histidine 330 together coordinate heme. The chain crosses the membrane as a helical span at residues 318-340; that stretch reads WLGRMMFLDAMIHGSAYTSYTVA. The N-linked (GlcNAc...) asparagine glycan is linked to asparagine 341. The Extracellular portion of the chain corresponds to 341 to 353; the sequence is NKTWATSKNRLYW. The chain crosses the membrane as a helical span at residues 354-374; it reads QFGVAALCLAGTMVFFSFAVF. The Cytoplasmic segment spans residues 375–377; the sequence is RKY. Residues 378 to 398 form a helical membrane-spanning segment; it reads FYEAFLFLHIVLGAMFFYACW. Heme is bound by residues histidine 386 and histidine 400. Residues 399–400 are Extracellular-facing; that stretch reads EH. The chain crosses the membrane as a helical span at residues 401–423; sequence VVSLSGIEWIYTAIAIWIVDRII. An FAD-binding FR-type domain is found at 415-534; that stretch reads AIWIVDRIIR…EGPYGSSSPV (120 aa). The Cytoplasmic segment spans residues 424–711; the sequence is RIIKASYFGF…IEYFEEYQCW (288 aa). 479-485 contacts FAD; sequence HPFTVLD. Residues 526–529 and 677–678 each bind NADP(+); these read GPYG and CG.

This sequence belongs to the ferric reductase (FRE) family. The cofactor is FAD. It depends on heme as a cofactor.

It is found in the cell membrane. It catalyses the reaction 2 a Fe(II)-siderophore + NADP(+) + H(+) = 2 a Fe(III)-siderophore + NADPH. Its function is as follows. Metalloreductase responsible for reducing extracellular iron and copper prior to import. Catalyzes the reductive uptake of Fe(3+)-salts and Fe(3+) bound to catecholate or hydroxamate siderophores. Fe(3+) is reduced to Fe(2+), which then dissociates from the siderophore and can be imported by the high-affinity Fe(2+) transport complex in the plasma membrane. Also participates in Cu(2+) reduction and Cu(+) uptake. This chain is Ferric/cupric reductase transmembrane component 2 (FRE2), found in Saccharomyces cerevisiae (strain ATCC 204508 / S288c) (Baker's yeast).